Here is a 417-residue protein sequence, read N- to C-terminus: N-acetylmuramoyl-L-alanine amidase AmiC (417 aa).

The segment at residues 1–31 is a signal peptide (tat-type signal); the sequence is MSGSNTAISRRRLLQGAGAMWLLSVSQVSLA. Residues 166–185 form a disordered region; the sequence is LEKQVPPAQSGPQPGKAGRD. Residues 190-404 form the MurNAc-LAA domain; the sequence is IMLDPGHGGE…VAESILAGIK (215 aa).

The protein belongs to the N-acetylmuramoyl-L-alanine amidase 3 family. In terms of processing, predicted to be exported by the Tat system. The position of the signal peptide cleavage has not been experimentally proven.

It is found in the periplasm. It catalyses the reaction Hydrolyzes the link between N-acetylmuramoyl residues and L-amino acid residues in certain cell-wall glycopeptides.. Cell-wall hydrolase involved in septum cleavage during cell division. The sequence is that of N-acetylmuramoyl-L-alanine amidase AmiC (amiC) from Escherichia coli O6:H1 (strain CFT073 / ATCC 700928 / UPEC).